The sequence spans 1159 residues: DNA-directed RNA polymerase subunit beta' (1159 aa).

The Mg(2+) site is built by aspartate 398, aspartate 400, and aspartate 402. The Zn(2+) site is built by cysteine 741, cysteine 815, cysteine 822, and cysteine 825.

It belongs to the RNA polymerase beta' chain family. The RNAP catalytic core consists of 2 alpha, 1 beta, 1 beta' and 1 omega subunit. When a sigma factor is associated with the core the holoenzyme is formed, which can initiate transcription. Requires Mg(2+) as cofactor. The cofactor is Zn(2+).

The enzyme catalyses RNA(n) + a ribonucleoside 5'-triphosphate = RNA(n+1) + diphosphate. Its function is as follows. DNA-dependent RNA polymerase catalyzes the transcription of DNA into RNA using the four ribonucleoside triphosphates as substrates. The polypeptide is DNA-directed RNA polymerase subunit beta' (Porphyromonas cangingivalis).